Here is a 736-residue protein sequence, read N- to C-terminus: Orphan sodium- and chloride-dependent neurotransmitter transporter NTT5 (736 aa).

The Cytoplasmic portion of the chain corresponds to methionine 1–glycine 138. The next 3 membrane-spanning stretches (helical) occupy residues cysteine 139–leucine 159, isoleucine 177–glycine 197, and tyrosine 199–valine 219. The Extracellular portion of the chain corresponds to proline 220–serine 263. Asparagine 229 carries N-linked (GlcNAc...) asparagine glycosylation. Helical transmembrane passes span proline 264 to isoleucine 284, threonine 290 to isoleucine 310, valine 338 to alanine 358, and leucine 383 to isoleucine 403. Residues threonine 404 to valine 495 lie on the Extracellular side of the membrane. Transmembrane regions (helical) follow at residues phenylalanine 496–isoleucine 516, histidine 534–threonine 554, tyrosine 568–alanine 588, isoleucine 609–methionine 629, and alanine 659–valine 679. Topologically, residues tyrosine 680–serine 736 are cytoplasmic.

Belongs to the sodium:neurotransmitter symporter (SNF) (TC 2.A.22) family. SLC6A16 subfamily. Highly expressed in peripheral tissues, particularly in testis, pancreas, and prostate.

It localises to the membrane. This Homo sapiens (Human) protein is Orphan sodium- and chloride-dependent neurotransmitter transporter NTT5 (SLC6A16).